A 72-amino-acid chain; its full sequence is Translation initiation factor IF-1 (72 aa).

The region spanning 1–72 is the S1-like domain; it reads MSKEEVLEFS…TKGRITYRYK (72 aa).

This sequence belongs to the IF-1 family. Component of the 30S ribosomal translation pre-initiation complex which assembles on the 30S ribosome in the order IF-2 and IF-3, IF-1 and N-formylmethionyl-tRNA(fMet); mRNA recruitment can occur at any time during PIC assembly.

The protein localises to the cytoplasm. Functionally, one of the essential components for the initiation of protein synthesis. Stabilizes the binding of IF-2 and IF-3 on the 30S subunit to which N-formylmethionyl-tRNA(fMet) subsequently binds. Helps modulate mRNA selection, yielding the 30S pre-initiation complex (PIC). Upon addition of the 50S ribosomal subunit IF-1, IF-2 and IF-3 are released leaving the mature 70S translation initiation complex. The chain is Translation initiation factor IF-1 from Bartonella bacilliformis (strain ATCC 35685 / KC583 / Herrer 020/F12,63).